We begin with the raw amino-acid sequence, 65 residues long: Toxin Cbo5 (65 aa).

One can recognise an LCN-type CS-alpha/beta domain in the interval 2–65; the sequence is KDGYLVDKTG…QTWPLPNKSC (64 aa). 4 disulfides stabilise this stretch: Cys12/Cys65, Cys16/Cys41, Cys25/Cys46, and Cys29/Cys48.

The protein belongs to the long (4 C-C) scorpion toxin superfamily. Sodium channel inhibitor family. Beta subfamily. Expressed by the venom gland.

It localises to the secreted. A probable toxin that has no activity on the tested sodium channels (when tested at 200 nM) and is not toxic to mice, crickets or sweet water shrimps. It resembles Beta toxins that bind voltage-independently at site-4 of sodium channels and shift the voltage of activation toward more negative potentials, thereby affecting sodium channel activation and promoting spontaneous and repetitive firing. The chain is Toxin Cbo5 from Centruroides bonito (Scorpion).